A 173-amino-acid polypeptide reads, in one-letter code: MDITIQHPWFRRQFYSFFGPNKMFEQCFGEHIQEADLFPSSVLSPFYFKYPFLRLPSWIESGLSEMRLEKDKFSINLDVKHFSPEELKVKVSGDFIEIHGKHEERQDEHGYVSRDFQRRYKIPVDVDPLSITSSLSPDGVLTVCGPRKQGDVPERSIPITREEKAALGAAPKK.

N-acetylmethionine is present on Met1. Residues 54 to 162 (RLPSWIESGL…PERSIPITRE (109 aa)) enclose the sHSP domain. Zn(2+) is bound by residues His81, His102, Glu104, and His109.

This sequence belongs to the small heat shock protein (HSP20) family. As to quaternary structure, heteromer composed of three CRYAA and one CRYAB subunits. Aggregates with homologous proteins, including the small heat shock protein HSPB1, to form large heteromeric complexes. Inter-subunit bridging via zinc ions enhances stability, which is crucial as there is no protein turn over in the lens.

In terms of biological role, may contribute to the transparency and refractive index of the lens. The protein is Alpha-crystallin B chain (CRYAB) of Aquarana catesbeiana (American bullfrog).